Consider the following 80-residue polypeptide: MLSLQILAIVALVVAAIIAIVVWSIVFIEYRKILRQRKIDRLIDRIREREEDSGNESEGDQEELAALERGHLAPWDVDDL.

Residues 1-7 (MLSLQIL) lie on the Extracellular side of the membrane. The chain crosses the membrane as a helical span at residues 8–28 (AIVALVVAAIIAIVVWSIVFI). The Cytoplasmic segment spans residues 29-80 (EYRKILRQRKIDRLIDRIREREEDSGNESEGDQEELAALERGHLAPWDVDDL). A disordered region spans residues 49 to 80 (REEDSGNESEGDQEELAALERGHLAPWDVDDL). 2 positions are modified to phosphoserine; by host CK2: Ser-53 and Ser-57. Over residues 53–65 (SGNESEGDQEELA) the composition is skewed to acidic residues.

This sequence belongs to the HIV-1 VPU protein family. Homopentamer. Interacts with host CD4 and BRTC; these interactions induce proteasomal degradation of CD4. Interacts with host BST2; this interaction leads to the degradation of host BST2. Interacts with host FBXW11. Interacts with host AP1M1; this interaction plays a role in the mistrafficking and subsequent degradation of host BST2. Interacts with host RANBP2; this interaction allows Vpu to down-regulate host BLM sumoylation. Post-translationally, phosphorylated by host CK2. This phosphorylation is necessary for interaction with human BTRC and degradation of CD4.

The protein localises to the host membrane. Ion channel activity is inhibited by hexamethylene amiloride in vitro. Its function is as follows. Enhances virion budding by targeting host CD4 and Tetherin/BST2 to proteasome degradation. Degradation of CD4 prevents any unwanted premature interactions between viral Env and its host receptor CD4 in the endoplasmic reticulum. Degradation of antiretroviral protein Tetherin/BST2 is important for virion budding, as BST2 tethers new viral particles to the host cell membrane. Mechanistically, Vpu bridges either CD4 or BST2 to BTRC, a substrate recognition subunit of the Skp1/Cullin/F-box protein E3 ubiquitin ligase, induces their ubiquitination and subsequent proteasomal degradation. The alteration of the E3 ligase specificity by Vpu seems to promote the degradation of host IKBKB, leading to NF-kappa-B down-regulation and subsequent apoptosis. Acts as a viroporin that forms an oligomeric ion channel in membranes. Modulates the host DNA repair mechanisms to promote degradation of nuclear viral cDNA in cells that are already productively infected in order to suppress immune sensing and proviral hyper-integration (superinfection). Manipulates PML-NBs and modulates SUMOylation of host BLM protein thereby enhancing its DNA-end processing activity toward viral unintegrated linear DNA. Also inhibits RAD52-mediated homologous repair of viral cDNA, preventing the generation of dead-end circular forms of single copies of the long terminal repeat and permitting sustained nucleolytic attack. The polypeptide is Protein Vpu (Human immunodeficiency virus type 1 group M subtype B (strain 89.6) (HIV-1)).